Reading from the N-terminus, the 316-residue chain is Tyrosine recombinase XerC (316 aa).

The region spanning 11-97 (SGLRKPLDQF…SLRSFFDFLI (87 aa)) is the Core-binding (CB) domain. The Tyr recombinase domain maps to 118–298 (PLPKNLDVDE…DFQHLADVYD (181 aa)). Residues Arg-157, Lys-181, His-250, Arg-253, and His-276 contribute to the active site. Tyr-285 functions as the O-(3'-phospho-DNA)-tyrosine intermediate in the catalytic mechanism.

The protein belongs to the 'phage' integrase family. XerC subfamily. Forms a cyclic heterotetrameric complex composed of two molecules of XerC and two molecules of XerD.

Its subcellular location is the cytoplasm. Site-specific tyrosine recombinase, which acts by catalyzing the cutting and rejoining of the recombining DNA molecules. The XerC-XerD complex is essential to convert dimers of the bacterial chromosome into monomers to permit their segregation at cell division. It also contributes to the segregational stability of plasmids. In Vibrio vulnificus (strain CMCP6), this protein is Tyrosine recombinase XerC.